Reading from the N-terminus, the 276-residue chain is Monoglyceride lipase homolog (276 aa).

It belongs to the orthopoxvirus OPG043 family.

In Cynomys gunnisoni (Gunnison's prairie dog), this protein is Monoglyceride lipase homolog (OPG043).